Here is a 223-residue protein sequence, read N- to C-terminus: Ribosomal RNA small subunit methyltransferase G (223 aa).

Residues G82, L87, 133-134 (AE), and R151 contribute to the S-adenosyl-L-methionine site.

This sequence belongs to the methyltransferase superfamily. RNA methyltransferase RsmG family.

The protein resides in the cytoplasm. Specifically methylates the N7 position of guanine in position 518 of 16S rRNA. In Corynebacterium glutamicum (strain ATCC 13032 / DSM 20300 / JCM 1318 / BCRC 11384 / CCUG 27702 / LMG 3730 / NBRC 12168 / NCIMB 10025 / NRRL B-2784 / 534), this protein is Ribosomal RNA small subunit methyltransferase G.